The following is a 427-amino-acid chain: N-myc proto-oncogene protein (427 aa).

4 disordered regions span residues 45–79 (FELL…SVGL), 144–173 (EKLQ…SGRA), 195–255 (AAEG…STNK), and 297–349 (APSP…RNHN). 2 stretches are compositionally biased toward pro residues: residues 49 to 61 (PTPP…PAPG) and 152 to 167 (AAPP…PPVP). Residues 210-221 (RASSSSSSSGDD) show a composition bias toward low complexity. Acidic residues predominate over residues 222 to 242 (TLSDSEDDEDEEEEDEEEEID). Phosphoserine; by CK2 occurs at positions 224 and 226. The 54-residue stretch at 343 to 396 (ERRRNHNILERQRANDLRSSFLTLRDHVLSELVQNEKAAKVVILKKATEYVHSL) folds into the bHLH domain. The interval 396-417 (LQAEEQKLLLEKEKLQARQEQL) is leucine-zipper.

As to quaternary structure, efficient DNA binding requires dimerization with another bHLH protein. Binds DNA as a heterodimer with MAX.

It localises to the nucleus. The chain is N-myc proto-oncogene protein (MYCN) from Serinus canaria (Island canary).